Consider the following 259-residue polypeptide: Phosphatidylglycerol--prolipoprotein diacylglyceryl transferase (259 aa).

The next 4 helical transmembrane spans lie at 9-29 (IIFS…VIGI), 55-75 (FITY…VLLY), 92-112 (EGGM…YLFC), and 117-137 (INFL…LFLG). Arg-138 contributes to the a 1,2-diacyl-sn-glycero-3-phospho-(1'-sn-glycerol) binding site. 3 helical membrane passes run 172-192 (QLYE…YTTF), 201-221 (GLNS…IEIF), and 228-248 (IGFI…MLLL).

The protein belongs to the Lgt family.

It is found in the cell inner membrane. It catalyses the reaction L-cysteinyl-[prolipoprotein] + a 1,2-diacyl-sn-glycero-3-phospho-(1'-sn-glycerol) = an S-1,2-diacyl-sn-glyceryl-L-cysteinyl-[prolipoprotein] + sn-glycerol 1-phosphate + H(+). It participates in protein modification; lipoprotein biosynthesis (diacylglyceryl transfer). Functionally, catalyzes the transfer of the diacylglyceryl group from phosphatidylglycerol to the sulfhydryl group of the N-terminal cysteine of a prolipoprotein, the first step in the formation of mature lipoproteins. The protein is Phosphatidylglycerol--prolipoprotein diacylglyceryl transferase of Rickettsia africae (strain ESF-5).